Consider the following 105-residue polypeptide: Cyclotide vibi-J (105 aa).

Positions 1-9 are cleaved as a signal peptide; sequence AAFALPALA. Positions 10–71 are excised as a propeptide; it reads TSFEKDFITH…KSSNSINALG (62 aa). The segment at residues 72–102 is a cross-link (cyclopeptide (Gly-Asn)); it reads GTFPCGESCVWIPCISKVIGCACKSKVCYKN. Cystine bridges form between Cys76–Cys92, Cys80–Cys94, and Cys85–Cys99. Residues 103 to 105 constitute a propeptide that is removed on maturation; the sequence is SLA.

In terms of processing, this is a cyclic peptide.

In terms of biological role, probably participates in a plant defense mechanism. The polypeptide is Cyclotide vibi-J (Viola biflora (Yellow wood violet)).